An 874-amino-acid chain; its full sequence is Alanine--tRNA ligase (874 aa).

Zn(2+) is bound by residues histidine 562, histidine 566, cysteine 665, and histidine 669.

Belongs to the class-II aminoacyl-tRNA synthetase family. Requires Zn(2+) as cofactor.

The protein resides in the cytoplasm. The catalysed reaction is tRNA(Ala) + L-alanine + ATP = L-alanyl-tRNA(Ala) + AMP + diphosphate. Its function is as follows. Catalyzes the attachment of alanine to tRNA(Ala) in a two-step reaction: alanine is first activated by ATP to form Ala-AMP and then transferred to the acceptor end of tRNA(Ala). Also edits incorrectly charged Ser-tRNA(Ala) and Gly-tRNA(Ala) via its editing domain. The sequence is that of Alanine--tRNA ligase from Pseudomonas aeruginosa (strain ATCC 15692 / DSM 22644 / CIP 104116 / JCM 14847 / LMG 12228 / 1C / PRS 101 / PAO1).